A 138-amino-acid polypeptide reads, in one-letter code: Holo-[acyl-carrier-protein] synthase (138 aa).

Aspartate 8 and glutamate 57 together coordinate Mg(2+).

It belongs to the P-Pant transferase superfamily. AcpS family. Requires Mg(2+) as cofactor.

The protein resides in the cytoplasm. The catalysed reaction is apo-[ACP] + CoA = holo-[ACP] + adenosine 3',5'-bisphosphate + H(+). Functionally, transfers the 4'-phosphopantetheine moiety from coenzyme A to a Ser of acyl-carrier-protein. The chain is Holo-[acyl-carrier-protein] synthase from Phenylobacterium zucineum (strain HLK1).